A 169-amino-acid chain; its full sequence is E1B protein, small T-antigen (169 aa).

This sequence belongs to the adenoviridae E1B 19 kDa protein family.

The polypeptide is E1B protein, small T-antigen (Canine adenovirus serotype 1 (strain CLL) (CAdV-1)).